A 351-amino-acid polypeptide reads, in one-letter code: GTPase Obg (351 aa).

An Obg domain is found at Met1–Ile159. Residues Ala160 to Arg327 form the OBG-type G domain. Residues Gly166–Ser173, Phe191–Thr195, Asp212–Gly215, Asn279–Asp282, and Ser308–Ala310 contribute to the GTP site. 2 residues coordinate Mg(2+): Ser173 and Thr193.

It belongs to the TRAFAC class OBG-HflX-like GTPase superfamily. OBG GTPase family. Monomer. The cofactor is Mg(2+).

The protein resides in the cytoplasm. Functionally, an essential GTPase which binds GTP, GDP and possibly (p)ppGpp with moderate affinity, with high nucleotide exchange rates and a fairly low GTP hydrolysis rate. Plays a role in control of the cell cycle, stress response, ribosome biogenesis and in those bacteria that undergo differentiation, in morphogenesis control. The protein is GTPase Obg of Rhodospirillum centenum (strain ATCC 51521 / SW).